A 272-amino-acid polypeptide reads, in one-letter code: NH(3)-dependent NAD(+) synthetase (272 aa).

Tyrosine 33 lines the deamido-NAD(+) pocket. ATP is bound by residues 45–52, arginine 79, and glutamine 85; that span reads GISGGQDS. Residue aspartate 51 coordinates Mg(2+). A deamido-NAD(+)-binding site is contributed by arginine 138. Residue threonine 158 coordinates ATP. A Mg(2+)-binding site is contributed by glutamate 163. Lysine 171 and aspartate 178 together coordinate deamido-NAD(+). ATP contacts are provided by lysine 187 and threonine 209. Residues glutamate 224 and 258 to 259 each bind deamido-NAD(+); that span reads HK.

It belongs to the NAD synthetase family. As to quaternary structure, homodimer. In terms of processing, phosphorylated during sporulation.

The enzyme catalyses deamido-NAD(+) + NH4(+) + ATP = AMP + diphosphate + NAD(+) + H(+). The protein operates within cofactor biosynthesis; NAD(+) biosynthesis; NAD(+) from deamido-NAD(+) (ammonia route): step 1/1. In terms of biological role, catalyzes the ATP-dependent amidation of deamido-NAD to form NAD. Uses ammonia as a nitrogen source. This chain is NH(3)-dependent NAD(+) synthetase, found in Bacillus subtilis (strain 168).